The chain runs to 71 residues: Brevinin-1E (71 aa).

Positions 1–22 (MFTLKKSMLLLFFLGTINLSLC) are cleaved as a signal peptide. A propeptide spanning residues 23–45 (EEERDADEEERRDNPDESEVEVE) is cleaved from the precursor. An intrachain disulfide couples Cys-65 to Cys-71.

Belongs to the frog skin active peptide (FSAP) family. Brevinin subfamily. Expressed by the skin glands.

The protein localises to the secreted. Shows antibacterial activity against representative Gram-negative and Gram-positive bacterial species, and a very high hemolytic activity. The polypeptide is Brevinin-1E (Pelophylax lessonae (Pool frog)).